The primary structure comprises 414 residues: Arginine deiminase (414 aa).

The active-site Amidino-cysteine intermediate is the C402.

This sequence belongs to the arginine deiminase family.

The protein localises to the cytoplasm. The enzyme catalyses L-arginine + H2O = L-citrulline + NH4(+). Its pathway is amino-acid degradation; L-arginine degradation via ADI pathway; carbamoyl phosphate from L-arginine: step 1/2. This Oenococcus oeni (strain ATCC BAA-331 / PSU-1) protein is Arginine deiminase.